A 356-amino-acid chain; its full sequence is Protein RecA (356 aa).

79–86 (GPESSGKT) serves as a coordination point for ATP.

Belongs to the RecA family.

Its subcellular location is the cytoplasm. In terms of biological role, can catalyze the hydrolysis of ATP in the presence of single-stranded DNA, the ATP-dependent uptake of single-stranded DNA by duplex DNA, and the ATP-dependent hybridization of homologous single-stranded DNAs. It interacts with LexA causing its activation and leading to its autocatalytic cleavage. The polypeptide is Protein RecA (Borrelia hermsii (strain HS1 / DAH)).